A 130-amino-acid polypeptide reads, in one-letter code: Con-Ins G2b (130 aa).

A signal peptide spans 1–23 (MTTSSYFLLVALGLLLYVRQSFS). Intrachain disulfides connect Cys29/Cys100, Cys41/Cys103, Cys53/Cys116, and Cys102/Cys107. Pro34 carries the post-translational modification 4-hydroxyproline; partial. The tract at residues 54 to 77 (EEEEARRGGTNDGGKKRRRASPLR) is disordered. A propeptide spans 59-92 (RRGGTNDGGKKRRRASPLRKRRRFISMLKARAKR) (c peptide). Residues 68–77 (KKRRRASPLR) show a composition bias toward basic residues. 4-carboxyglutamate; partial is present on Glu111.

It belongs to the insulin family. Heterodimer of A and B chains; disulfide-linked. As to expression, expressed by the venom gland.

Its subcellular location is the secreted. Functionally, this venom insulin, from a fish-hunting cone snail, facilitates prey capture by rapidly inducing hypoglycemic shock. Intraperitoneal injection of this peptide into zebrafish lowers blood glucose with the same potency than human insulin. In vivo, when applied to water, this peptide reduces overall locomotor activity of zebrafish larvae, observed as a significant decrease in the percentage of time spent swimming and movement frequency. The chain is Con-Ins G2b from Conus geographus (Geography cone).